The following is a 96-amino-acid chain: MSNIRPLHDRVVIRRVEEETKTAGGILLPGSAAEKPSQGEVIAVGNGQITDNGVRALDVKVGDKVLFGTYAGTTVKVNGEELLIMKESDILAVLEG.

This sequence belongs to the GroES chaperonin family. As to quaternary structure, heptamer of 7 subunits arranged in a ring. Interacts with the chaperonin GroEL.

The protein resides in the cytoplasm. Functionally, together with the chaperonin GroEL, plays an essential role in assisting protein folding. The GroEL-GroES system forms a nano-cage that allows encapsulation of the non-native substrate proteins and provides a physical environment optimized to promote and accelerate protein folding. GroES binds to the apical surface of the GroEL ring, thereby capping the opening of the GroEL channel. This Acinetobacter baumannii (strain AB307-0294) protein is Co-chaperonin GroES.